A 300-amino-acid polypeptide reads, in one-letter code: Protoheme IX farnesyltransferase (300 aa).

The next 9 helical transmembrane spans lie at 21-43 (PRVV…RGVP), 45-65 (PLSV…AGAF), 94-114 (ASLI…LLFV), 117-137 (LSAL…SIVL), 145-167 (IVWG…TGSI), 171-193 (AIVL…SIHY), 213-233 (LVVL…LLLI), 235-255 (VAHM…WFVY), and 272-292 (AMHI…SVGI).

The protein belongs to the UbiA prenyltransferase family. Protoheme IX farnesyltransferase subfamily.

It is found in the cell membrane. It carries out the reaction heme b + (2E,6E)-farnesyl diphosphate + H2O = Fe(II)-heme o + diphosphate. The protein operates within porphyrin-containing compound metabolism; heme O biosynthesis; heme O from protoheme: step 1/1. Its function is as follows. Converts heme B (protoheme IX) to heme O by substitution of the vinyl group on carbon 2 of heme B porphyrin ring with a hydroxyethyl farnesyl side group. The protein is Protoheme IX farnesyltransferase of Tropheryma whipplei (strain TW08/27) (Whipple's bacillus).